The following is a 338-amino-acid chain: tRNA-specific 2-thiouridylase MnmA (338 aa).

Residues Ala6–Ser13 and Met32 each bind ATP. Cys92 functions as the Nucleophile in the catalytic mechanism. Residues Cys92 and Cys186 are joined by a disulfide bond. Gly116 is an ATP binding site. The segment at Lys134–Gln136 is interaction with tRNA. Residue Cys186 is the Cysteine persulfide intermediate of the active site. The interaction with tRNA stretch occupies residues Arg288–Tyr289.

The protein belongs to the MnmA/TRMU family.

It is found in the cytoplasm. It carries out the reaction S-sulfanyl-L-cysteinyl-[protein] + uridine(34) in tRNA + AH2 + ATP = 2-thiouridine(34) in tRNA + L-cysteinyl-[protein] + A + AMP + diphosphate + H(+). Its function is as follows. Catalyzes the 2-thiolation of uridine at the wobble position (U34) of tRNA, leading to the formation of s(2)U34. This chain is tRNA-specific 2-thiouridylase MnmA, found in Campylobacter fetus subsp. fetus (strain 82-40).